A 344-amino-acid chain; its full sequence is Homoserine O-acetyltransferase (344 aa).

Cysteine 142 functions as the Acyl-thioester intermediate in the catalytic mechanism. The substrate site is built by lysine 163 and serine 192. Catalysis depends on histidine 235, which acts as the Proton acceptor. Glutamate 237 is a catalytic residue. A substrate-binding site is contributed by arginine 249.

It belongs to the MetA family.

The protein resides in the cytoplasm. The enzyme catalyses L-homoserine + acetyl-CoA = O-acetyl-L-homoserine + CoA. Its pathway is amino-acid biosynthesis; L-methionine biosynthesis via de novo pathway; O-acetyl-L-homoserine from L-homoserine: step 1/1. In terms of biological role, transfers an acetyl group from acetyl-CoA to L-homoserine, forming acetyl-L-homoserine. This is Homoserine O-acetyltransferase from Bifidobacterium adolescentis (strain ATCC 15703 / DSM 20083 / NCTC 11814 / E194a).